Reading from the N-terminus, the 516-residue chain is Potassium voltage-gated channel subfamily A member 10 (516 aa).

Residues 223-244 (VALVSVLVIVISIIIFCMETLP) form a helical membrane-spanning segment. Residue N261 is glycosylated (N-linked (GlcNAc...) asparagine). The helical transmembrane segment at 276 to 296 (FFVIETACIIWFSFELFVRFI) threads the bilayer. Residues 308–328 (IMNIIDIVSIIPYFVTLTTEL) form a helical membrane-spanning segment. An N-linked (GlcNAc...) asparagine glycan is attached at N339. A helical; Voltage-sensor transmembrane segment spans residues 344-363 (ILRIIRLVRVFRIFKLSRHS). The chain crosses the membrane as a helical span at residues 380–400 (LGLLIFFLFIGVILFSSAVYF). Residues 426-431 (TVGYGD) carry the Selectivity filter motif. The chain crosses the membrane as a helical span at residues 441 to 461 (IVGTLCAIAGVLTIALPVPVI). Residue N503 is glycosylated (N-linked (GlcNAc...) asparagine).

Belongs to the potassium channel family. A (Shaker) (TC 1.A.1.2) subfamily. Kv1.8/KCNA10 sub-subfamily. In terms of assembly, homotetramer. In terms of tissue distribution, detected in brain, cochlear sensory epithelium, cochlear ganglion, tegumentum vasculosum. Detected at low levels in cochlear lagena.

It localises to the membrane. It catalyses the reaction K(+)(in) = K(+)(out). Its activity is regulated as follows. The channel activity is up-regulated by cAMP. In terms of biological role, voltage-gated potassium ion channel that mediates K(+) permeability of excitable membranes. When opened in response to the voltage difference across the membrane, KCNA10 channel selectively allows the flow of potassium ions across the membrane down their electrochemical gradient. In Gallus gallus (Chicken), this protein is Potassium voltage-gated channel subfamily A member 10 (KCNA10).